The primary structure comprises 277 residues: NH(3)-dependent NAD(+) synthetase (277 aa).

46-53 contacts ATP; the sequence is GISGGQDS. Aspartate 52 is a Mg(2+) binding site. Deamido-NAD(+) is bound at residue arginine 142. Threonine 162 is an ATP binding site. Glutamate 167 is a Mg(2+) binding site. Deamido-NAD(+) contacts are provided by lysine 175 and aspartate 182. The ATP site is built by lysine 191 and threonine 213. Residue 263–264 coordinates deamido-NAD(+); that stretch reads HK.

The protein belongs to the NAD synthetase family. Homodimer.

The catalysed reaction is deamido-NAD(+) + NH4(+) + ATP = AMP + diphosphate + NAD(+) + H(+). The protein operates within cofactor biosynthesis; NAD(+) biosynthesis; NAD(+) from deamido-NAD(+) (ammonia route): step 1/1. In terms of biological role, catalyzes the ATP-dependent amidation of deamido-NAD to form NAD. Uses ammonia as a nitrogen source. This Corynebacterium glutamicum (strain R) protein is NH(3)-dependent NAD(+) synthetase.